The primary structure comprises 200 residues: Large ribosomal subunit protein uL29 (200 aa).

The tract at residues 1 to 107 (MTIAKELKQK…KQETKKAEVK (107 aa)) is large ribosomal subunit protein uL29. The segment at 92–200 (STKPESKQET…KMIKTKEKKQ (109 aa)) is disordered. The segment covering 93-179 (TKPESKQETK…QEVKKVEAKK (87 aa)) has biased composition (basic and acidic residues). The unknown stretch occupies residues 108-200 (PKVESKPESK…KMIKTKEKKQ (93 aa)). The span at 186 to 200 (KPVKAKMIKTKEKKQ) shows a compositional bias: basic residues.

The protein belongs to the universal ribosomal protein uL29 family.

The sequence is that of Large ribosomal subunit protein uL29 from Mycoplasma genitalium (strain ATCC 33530 / DSM 19775 / NCTC 10195 / G37) (Mycoplasmoides genitalium).